A 225-amino-acid polypeptide reads, in one-letter code: MGYWNSKVVPKFKKLFEKNSAKKAAAAEATKTFDESKETINKEIEEKKTELQPKVVETYEATSAEVKALVRDPKVAGLKKNSAAVQKYLEELVKIEFPGSKAVSEASSSFGAGYVAGPVTFIFEKVSVFLPEEVKTKEIPVEEVKAEEPAKTEEPAKTEGTSGEKEEIVEETKKGETPETAVVEEKKPEVEEKKEEATPAPAVVETPVKEPETTTTAPVAEPPKP.

The N-myristoyl glycine moiety is linked to residue Gly-2. Phosphothreonine is present on Thr-32. Position 107 is a phosphoserine (Ser-107). Residues 140 to 197 (PVEEVKAEEPAKTEEPAKTEGTSGEKEEIVEETKKGETPETAVVEEKKPEVEEKKEEA) are compositionally biased toward basic and acidic residues. The segment at 140–225 (PVEEVKAEEP…TAPVAEPPKP (86 aa)) is disordered. Thr-152 and Thr-177 each carry phosphothreonine.

Belongs to the DREPP family. As to quaternary structure, interacts with Turnip mosaic virus (TuMV) P3N-PIPO. Requires Cu(2+) as cofactor. Mostly expressed in the basal region of hypocotyls. Expressed in seedlings, roots, shoots, stems, leaves (e.g. in epidermis and vascular tissues), flowers (e.g. in pistils and anthers) and siliques (at protein level).

It is found in the cell membrane. The protein resides in the cytoplasm. Its subcellular location is the cytoskeleton. The protein localises to the cell junction. It localises to the plasmodesma. Functionally, may be involved in intracellular signaling through interaction with PtdInsPs and calmodulin (CaM); may keep PtdInsPs attached to the plasma membrane until Ca(2+)-CaM reaches a competitive concentration subsequent to an increase triggered by a stimulus, thus leading to PtdInsPs release and subsequent activation of InsPs-dependent signaling cascade. Interacts competitively at the N-terminus with calcium ions and CaM (in a calcium-dependent manner), and with the phosphatidylinositol phosphates PtdIns(3,4,5)P(3), PtdIns(3,4)P(2), PtdIns(4,5)P(2) and PtdIns(3,5)P(2). Also binds weakly to PtdIns(3)P, PtdIns(4)P and PtdIns(5)P. Negative regulator of hypocotyl cell elongation by destabilizing cortical microtubules in a calcium-dependent manner. Binds directly to and destabilized microtubules to enhance microtubule depolymerization when cytoplasmic calcium increases. In case of Turnip mosaic virus (TuMV) infection, confers sensitivity by promoting viral cell-to-cell movement through interaction with viral P3N-PIPO. This chain is Plasma membrane-associated cation-binding protein 1 (PCAP1), found in Arabidopsis thaliana (Mouse-ear cress).